We begin with the raw amino-acid sequence, 288 residues long: Stress response protein YhaX (288 aa).

This is Stress response protein YhaX (yhaX) from Bacillus subtilis (strain 168).